The chain runs to 136 residues: Large-conductance mechanosensitive channel (136 aa).

3 helical membrane-spanning segments follow: residues 15–35 (IDLA…NSIV), 38–58 (IFMP…MFIQ), and 80–100 (GHFI…FFFV).

Belongs to the MscL family. Homopentamer.

The protein resides in the cell inner membrane. In terms of biological role, channel that opens in response to stretch forces in the membrane lipid bilayer. May participate in the regulation of osmotic pressure changes within the cell. The polypeptide is Large-conductance mechanosensitive channel (Bartonella tribocorum (strain CIP 105476 / IBS 506)).